We begin with the raw amino-acid sequence, 391 residues long: S-adenosylmethionine synthase (391 aa).

His-14 provides a ligand contact to ATP. A Mg(2+)-binding site is contributed by Asp-16. Glu-42 contacts K(+). The L-methionine site is built by Glu-55 and Gln-98. Residues 98-108 form a flexible loop region; that stretch reads QSVDIAMGVDE. ATP contacts are provided by residues 172-174, 238-239, Asp-247, 253-254, Ala-270, and Lys-274; these read DGK, RF, and RK. Residue Asp-247 participates in L-methionine binding. Lys-278 is an L-methionine binding site.

This sequence belongs to the AdoMet synthase family. Homotetramer; dimer of dimers. Requires Mg(2+) as cofactor. K(+) serves as cofactor.

Its subcellular location is the cytoplasm. It catalyses the reaction L-methionine + ATP + H2O = S-adenosyl-L-methionine + phosphate + diphosphate. It participates in amino-acid biosynthesis; S-adenosyl-L-methionine biosynthesis; S-adenosyl-L-methionine from L-methionine: step 1/1. Its function is as follows. Catalyzes the formation of S-adenosylmethionine (AdoMet) from methionine and ATP. The overall synthetic reaction is composed of two sequential steps, AdoMet formation and the subsequent tripolyphosphate hydrolysis which occurs prior to release of AdoMet from the enzyme. The protein is S-adenosylmethionine synthase of Clostridium botulinum (strain Hall / ATCC 3502 / NCTC 13319 / Type A).